A 214-amino-acid chain; its full sequence is Endothelial cell-specific chemotaxis regulator (214 aa).

The first 18 residues, 1–18 (MRLGSAILGLLLLQGYSS), serve as a signal peptide directing secretion. Topologically, residues 19 to 130 (QPTTTQTSQE…PTPTSESVLT (112 aa)) are extracellular. The interval 23–107 (TQTSQEILQK…DATPSPETTS (85 aa)) is disordered. The segment covering 28–57 (EILQKSSQVSLVSNQPVTPRSSTMDKQSLS) has biased composition (polar residues). A compositionally biased stretch (low complexity) spans 80 to 90 (RSSSSSSSSSS). The chain crosses the membrane as a helical span at residues 131–151 (VAAFGVISFIVILVVVVIILV). The Cytoplasmic segment spans residues 152-214 (SVVSLRFKCR…KGSMSAEKIL (63 aa)). A disordered region spans residues 163 to 184 (NKESEDPQKPGSSGLSESCSTA). The segment covering 172-184 (PGSSGLSESCSTA) has biased composition (polar residues). 2 positions are modified to phosphoserine: S204 and S207.

This sequence belongs to the ECSCR family. In terms of assembly, interacts with FLNA. Interacts with the 20S proteasome subunit PSMA7. Post-translationally, may be heavily O-glycosylated. In terms of tissue distribution, expressed in all tissues examined, highest expression was observed in lung and spleen endothelial cells.

The protein resides in the cell membrane. It localises to the cytoplasm. In terms of biological role, regulates endothelial chemotaxis and tube formation. Has a role in angiogenesis and apoptosis via modulation of the actin cytoskeleton and facilitation of proteasomal degradation of the apoptosis inhibitors BIRC3/IAP1 and BIRC2/IAP2. The chain is Endothelial cell-specific chemotaxis regulator (Ecscr) from Mus musculus (Mouse).